Consider the following 583-residue polypeptide: Radixin (583 aa).

Residues 5–295 (INVRVTTMDA…GNHELYMRRR (291 aa)) enclose the FERM domain. Residue 60–63 (KLNK) coordinates a 1,2-diacyl-sn-glycero-3-phospho-(1D-myo-inositol). An N6-succinyllysine modification is found at Lys83. Lys278 contacts a 1,2-diacyl-sn-glycero-3-phospho-(1D-myo-inositol). 3 disordered regions span residues 309–336 (AREE…AEKE), 374–407 (ELDQ…AKQA), and 460–526 (KEEL…RVKK). The segment covering 374–400 (ELDQERKRAKEEAERLEKERQAAEEAK) has biased composition (basic and acidic residues). Residues 469–480 (APPPPPPPPVIP) are compositionally biased toward pro residues. Basic and acidic residues-rich tracts occupy residues 483 to 492 (ENEHDEHDEN) and 506 to 525 (MNHR…ERVK). Position 564 is a phosphothreonine; by ROCK2 (Thr564).

In terms of assembly, interacts with CPNE1 (via VWFA domain) and CPNE4 (via VWFA domain). Binds NHERF1. Interacts with NHERF1, NHERF2, LAYN, MME/NEP and ICAM2. Interacts (via FERM domain) with SPN/CD43 cytoplasmic tail. Interacts with CD44. Interacts with CLIC5; may work together in a complex which also includes EZR and MYO6 to stabilize linkages between the plasma membrane and subjacent actin cytoskeleton at the base of stereocilia. Phosphorylated by tyrosine-protein kinases. Phosphorylation by ROCK2 suppresses the head-to-tail association of the N-terminal and C-terminal halves resulting in an opened conformation which is capable of actin and membrane-binding.

It is found in the cell membrane. Its subcellular location is the cytoplasm. The protein resides in the cytoskeleton. It localises to the cleavage furrow. The protein localises to the cell projection. It is found in the microvillus. Its subcellular location is the stereocilium. Its activity is regulated as follows. A head-to-tail association, of the N-terminal and C-terminal halves results in a closed conformation (inactive form) which is incapable of actin or membrane-binding. Probably plays a crucial role in the binding of the barbed end of actin filaments to the plasma membrane. The protein is Radixin (RDX) of Bos taurus (Bovine).